Consider the following 193-residue polypeptide: NADH-quinone oxidoreductase subunit B (193 aa).

Residues cysteine 72, cysteine 73, cysteine 137, and cysteine 167 each coordinate [4Fe-4S] cluster.

The protein belongs to the complex I 20 kDa subunit family. NDH-1 is composed of 14 different subunits. Subunits NuoB, C, D, E, F, and G constitute the peripheral sector of the complex. Requires [4Fe-4S] cluster as cofactor.

It is found in the cell inner membrane. It catalyses the reaction a quinone + NADH + 5 H(+)(in) = a quinol + NAD(+) + 4 H(+)(out). Its function is as follows. NDH-1 shuttles electrons from NADH, via FMN and iron-sulfur (Fe-S) centers, to quinones in the respiratory chain. The immediate electron acceptor for the enzyme in this species is believed to be ubiquinone. Couples the redox reaction to proton translocation (for every two electrons transferred, four hydrogen ions are translocated across the cytoplasmic membrane), and thus conserves the redox energy in a proton gradient. The polypeptide is NADH-quinone oxidoreductase subunit B (Bartonella bacilliformis (strain ATCC 35685 / KC583 / Herrer 020/F12,63)).